The sequence spans 70 residues: Cytoinsectotoxin-2c (70 aa).

The protein belongs to the cationic peptide 06 (cytoinsectotoxin) family. As to expression, expressed by the venom gland.

It localises to the secreted. Its function is as follows. Insecticidal and antimicrobial peptide. Has insecticidal activity against larvae of flesh fly S.carnaria. Has antibacterial activity against Gram-positive bacterium B.subtilis B-501 (MIC=1.25 uM) and Gram-negative bacterium E.coli DH5alpha (MIC=2.5 uM). This is Cytoinsectotoxin-2c from Lachesana tarabaevi (Spider).